A 471-amino-acid chain; its full sequence is Ubiquitin-conjugating enzyme E2 variant 3 (471 aa).

The 144-residue stretch at 2–145 folds into the UEV domain; that stretch reads EFDCEGLRRL…QEELPMYSLS (144 aa). Position 191-219 (191-219) interacts with NAD(+); it reads GELGIACTLAISAKGIADRLVLLDLSEGT.

This sequence in the N-terminal section; belongs to the ubiquitin-conjugating enzyme family. UEV subfamily. The protein in the C-terminal section; belongs to the LDH/MDH superfamily. Homodimer. As to expression, colon, colon carcinoma cell lines, normal cervical epithelium, carcinomas of the uterine cervix and peripheral blood leukocytes.

Possible negative regulator of polyubiquitination. The sequence is that of Ubiquitin-conjugating enzyme E2 variant 3 from Homo sapiens (Human).